A 111-amino-acid chain; its full sequence is MIWLTLVFASLLSVAGQLCQKQATCFVAISKRRKHIVLWLGLALACLGLAMVLWLLVLQNVPVGIAYPMLSLNFVWVTLAAVKLWHEPVSPRHWCGVAFIIGGIVILGSTV.

Topologically, residues 1–35 (MIWLTLVFASLLSVAGQLCQKQATCFVAISKRRKH) are cytoplasmic. Residues 36 to 56 (IVLWLGLALACLGLAMVLWLL) traverse the membrane as a helical segment. Residues 40-109 (LGLALACLGL…IIGGIVILGS (70 aa)) form the EamA domain. The Periplasmic portion of the chain corresponds to 57 to 60 (VLQN). A helical membrane pass occupies residues 61-81 (VPVGIAYPMLSLNFVWVTLAA). Residues 82-87 (VKLWHE) lie on the Cytoplasmic side of the membrane. The chain crosses the membrane as a helical span at residues 88-108 (PVSPRHWCGVAFIIGGIVILG). The Periplasmic portion of the chain corresponds to 109 to 111 (STV).

This sequence belongs to the ArnE family. As to quaternary structure, heterodimer of ArnE and ArnF.

It localises to the cell inner membrane. The protein operates within bacterial outer membrane biogenesis; lipopolysaccharide biosynthesis. Translocates 4-amino-4-deoxy-L-arabinose-phosphoundecaprenol (alpha-L-Ara4N-phosphoundecaprenol) from the cytoplasmic to the periplasmic side of the inner membrane. The sequence is that of Probable 4-amino-4-deoxy-L-arabinose-phosphoundecaprenol flippase subunit ArnE from Escherichia coli O157:H7.